The chain runs to 480 residues: Alpha-glucosidase (480 aa).

Residue 4–70 (VKIGIIGAGS…ADLKFEKTTS (67 aa)) coordinates NAD(+). Residues Asp-119 and Asn-153 each contribute to the substrate site. Cys-174 is a binding site for Mn(2+). His-175 functions as the Proton donor in the catalytic mechanism. His-203 is a Mn(2+) binding site. Asp-260 serves as the catalytic Proton acceptor.

Belongs to the glycosyl hydrolase 4 family. As to quaternary structure, homodimer. NAD(+) is required as a cofactor. The cofactor is Mn(2+).

The catalysed reaction is Hydrolysis of terminal, non-reducing (1-&gt;4)-linked alpha-D-glucose residues with release of alpha-D-glucose.. With respect to regulation, inhibited by EDTA in vitro. Is able to hydrolyze diverse types of alpha-glycoside bonds in di- and trisaccharides: alpha-1,4 bonds of maltose and maltotriose, alpha-1,1 bonds of trehalose, alpha-1,2 bonds of sucrose, alpha-1,3 bonds of turanose and melizitose, alpha-1,6 bonds of isomaltose and melibiose. AglA is not specific with respect to the configuration at the C-4 position of its substrates because it also possesses alpha-galactosidase activity. Acts on the substrate from the non-reducing end of the chain. The activity of AglA drops with increasing length of the saccharide chain. Does not hydrolyze alpha-, beta-, and gamma-cyclodextrins or polysaccharides (starch, pullulan, amylose, amylopectin, glycogen). Does not cleave beta-glycosidic bonds in di-, oligo-, or polysaccharides. The sequence is that of Alpha-glucosidase (aglA) from Thermotoga neapolitana.